The chain runs to 218 residues: Structural protein V19 (218 aa).

It localises to the virion. The polypeptide is Structural protein V19 (Sputnik virophage).